Consider the following 228-residue polypeptide: Large ribosomal subunit protein uL3 (228 aa).

The segment at methionine 135 to aspartate 159 is disordered. A compositionally biased stretch (polar residues) spans alanine 140 to valine 150. An N5-methylglutamine modification is found at glutamine 158.

It belongs to the universal ribosomal protein uL3 family. In terms of assembly, part of the 50S ribosomal subunit. Forms a cluster with proteins L14 and L19. In terms of processing, methylated by PrmB.

One of the primary rRNA binding proteins, it binds directly near the 3'-end of the 23S rRNA, where it nucleates assembly of the 50S subunit. The polypeptide is Large ribosomal subunit protein uL3 (Albidiferax ferrireducens (strain ATCC BAA-621 / DSM 15236 / T118) (Rhodoferax ferrireducens)).